We begin with the raw amino-acid sequence, 421 residues long: Transcription factor rglT (421 aa).

Positions 1-29 are disordered; that stretch reads MQYEAYQWGQSHPTSTSGSMLQDTPTAAS. Over residues 8-29 the composition is skewed to polar residues; it reads WGQSHPTSTSGSMLQDTPTAAS. The segment at residues 38 to 65 is a DNA-binding region (zn(2)-C6 fungal-type); that stretch reads CDECRKRKLKCSGEISGCSRCIKQSLSC. The segment covering 346-357 has biased composition (basic and acidic residues); that stretch reads EARQRRWHESPD. Residues 346-371 form a disordered region; that stretch reads EARQRRWHESPDSHPLPPDQRLNIPS.

The protein resides in the nucleus. Functionally, transcription factor that is important for oxidative stress resistance and essential for gliotoxin (GT) self-protection through the regulation of a gene encoding a putative gliT homolog, even if E.nidulans does not produce gliotoxin itself. This Emericella nidulans (strain FGSC A4 / ATCC 38163 / CBS 112.46 / NRRL 194 / M139) (Aspergillus nidulans) protein is Transcription factor rglT.